Here is a 166-residue protein sequence, read N- to C-terminus: PTS system glucose-specific EIIA component (166 aa).

In terms of domain architecture, PTS EIIA type-1 spans 36 to 140 (DVVFSEKIVG…SVLTPIVISN (105 aa)). Zn(2+) is bound by residues His-73 and His-88. His-88 serves as the catalytic Tele-phosphohistidine intermediate; for EIIA activity. The residue at position 88 (His-88) is a Phosphohistidine; by HPr.

As to quaternary structure, heterodimer with glycerol kinase (glpk). The cofactor is Zn(2+).

It is found in the cytoplasm. In terms of biological role, the phosphoenolpyruvate-dependent sugar phosphotransferase system (sugar PTS), a major carbohydrate active transport system, catalyzes the phosphorylation of incoming sugar substrates concomitantly with their translocation across the cell membrane. The enzyme II complex composed of PtsG and Crr is involved in glucose transport. This is PTS system glucose-specific EIIA component (crr) from Haemophilus influenzae (strain ATCC 51907 / DSM 11121 / KW20 / Rd).